The chain runs to 612 residues: Protein tipD (612 aa).

A disordered region spans residues 95–128 (RNEKKTQQQPPSGSSKMDSSSSSSSSNRVSGMGS). Over residues 106–128 (SGSSKMDSSSSSSSSNRVSGMGS) the composition is skewed to low complexity. 7 WD repeats span residues 322–361 (GHNSEIYCMAFNSIGNLLATGGGDKCVKVWDVISGQQKST), 364–403 (GASQSIVSVSFSPNDESILGTSNDNSARLWNTELGRSRHT), 406–444 (GHIGKVYTGKFINSNRVVTGSHDRTIKLWDLQKGYCTRT), 447–486 (CFSSCNDLVILGGSGTHLASGHVDHSVRFWDSNAGEPTQV), 490–530 (IHEG…TIRT), 535–576 (EYRN…TVKV), and 582–611 (NNGSSVCCCSWSPLANIFISADKDKNIIQW).

Belongs to the WD repeat tipD family.

Functionally, not known; disruption of the gene for tipD results in morphological defects. This Dictyostelium discoideum (Social amoeba) protein is Protein tipD (tipD).